The following is a 48-amino-acid chain: Cytochrome b559 subunit beta (48 aa).

A helical transmembrane segment spans residues 23-39 (WLAVHALAIPTVFFLGA). His-27 is a heme binding site.

The protein belongs to the PsbE/PsbF family. In terms of assembly, heterodimer of an alpha subunit and a beta subunit. PSII is composed of 1 copy each of membrane proteins PsbA, PsbB, PsbC, PsbD, PsbE, PsbF, PsbH, PsbI, PsbJ, PsbK, PsbL, PsbM, PsbT, PsbX, PsbY, Psb30/Ycf12, peripheral proteins PsbO, CyanoQ (PsbQ), PsbU, PsbV and a large number of cofactors. It forms dimeric complexes. Requires heme b as cofactor.

The protein localises to the cellular thylakoid membrane. Its function is as follows. This b-type cytochrome is tightly associated with the reaction center of photosystem II (PSII). PSII is a light-driven water:plastoquinone oxidoreductase that uses light energy to abstract electrons from H(2)O, generating O(2) and a proton gradient subsequently used for ATP formation. It consists of a core antenna complex that captures photons, and an electron transfer chain that converts photonic excitation into a charge separation. The sequence is that of Cytochrome b559 subunit beta from Prochlorococcus marinus (strain SARG / CCMP1375 / SS120).